The sequence spans 73 residues: EAGEECDCGSPANPCCDAATCKLRPGAQCADGLCCDQCRFIKKGTVCRPARGDWNDDTCTGQSADCPRNGLYG.

In terms of domain architecture, Disintegrin spans 1–73; that stretch reads EAGEECDCGS…ADCPRNGLYG (73 aa). Intrachain disulfides connect Cys-6–Cys-21, Cys-8–Cys-16, Cys-15–Cys-38, Cys-29–Cys-35, Cys-34–Cys-59, and Cys-47–Cys-66. A Cell attachment site motif is present at residues 51–53; sequence RGD.

This sequence belongs to the venom metalloproteinase (M12B) family. P-II subfamily. P-IIa sub-subfamily. Monomer (disintegrin). Expressed by the venom gland.

Its subcellular location is the secreted. Inhibits the three processes involved in platelet function (adhesion, activation and aggregation). It inhibits platelet adhesion to fibronectin with an IC(50) of 58.6 nM. It inhibits ATP release from platelet induced by ADP with an IC(50) of 19.5 nM on platelet-rich plasma, probably by binding to ADP receptors (P2RY1 and P2RY12). Finally, it inhibits ADP-induced platelet aggregation with IC(50) of 44.7 nM on platelet-rich plasma and 19.3 nM on whole blood, probably by binding to alpha-IIb/beta-3 (ITGA2B/ITGB3). In terms of biological role, inhibits ADP-induced platelet aggregation (IC(50) = 13.8 nM) probably by binding to alpha-IIb/beta-3 (ITGA2B/ITGB3) located on the platelet surface. The sequence is that of Disintegrin mojastin-2 from Crotalus scutulatus scutulatus (Mojave rattlesnake).